The sequence spans 368 residues: Caffeine synthase 3 (368 aa).

An S-adenosyl-L-homocysteine-binding site is contributed by tyrosine 23. Caffeine is bound at residue threonine 30. Residues cysteine 65, asparagine 70, aspartate 102, leucine 103, serine 137, and phenylalanine 138 each coordinate S-adenosyl-L-homocysteine. Caffeine-binding residues include tyrosine 155, histidine 158, and tryptophan 159. Residue asparagine 176 participates in Mg(2+) binding. Arginine 224 is a binding site for caffeine. Positions 262, 264, and 265 each coordinate Mg(2+). A caffeine-binding site is contributed by phenylalanine 320.

The protein belongs to the methyltransferase superfamily. Type-7 methyltransferase family. The cofactor is Mg(2+).

The enzyme catalyses theobromine + S-adenosyl-L-methionine = caffeine + S-adenosyl-L-homocysteine + H(+). It carries out the reaction 7-methylxanthine + S-adenosyl-L-methionine = theobromine + S-adenosyl-L-homocysteine + H(+). It functions in the pathway alkaloid biosynthesis. Functionally, involved in the biosynthesis of caffeine. Catalyzes the conversion of 7-methylxanthine (7mX) to theobromine and of theobromine to caffeine. This Camellia sinensis (Tea plant) protein is Caffeine synthase 3.